We begin with the raw amino-acid sequence, 402 residues long: Type II NADH:quinone oxidoreductase (402 aa).

Residues 12–16 (GAGYA), 39–40 (NK), and V83 contribute to the FAD site. The active site involves E172. FAD-binding positions include D302, 319–320 (AQ), and K379.

Belongs to the NADH dehydrogenase family. FAD serves as cofactor.

It localises to the cell membrane. It carries out the reaction a quinone + NADH + H(+) = a quinol + NAD(+). Its function is as follows. Alternative, nonproton pumping NADH:quinone oxidoreductase that delivers electrons to the respiratory chain by oxidation of NADH and reduction of quinones, and contributes to the regeneration of NAD(+). In Staphylococcus aureus (strain bovine RF122 / ET3-1), this protein is Type II NADH:quinone oxidoreductase.